The following is a 144-amino-acid chain: Ribosome-binding factor A (144 aa).

Disordered stretches follow at residues 1-22 (MPRH…QLRV) and 125-144 (TPAV…EEEQ). The span at 134–144 (QDPDSDREEEQ) shows a compositional bias: acidic residues.

Belongs to the RbfA family. As to quaternary structure, monomer. Binds 30S ribosomal subunits, but not 50S ribosomal subunits or 70S ribosomes.

Its subcellular location is the cytoplasm. In terms of biological role, one of several proteins that assist in the late maturation steps of the functional core of the 30S ribosomal subunit. Associates with free 30S ribosomal subunits (but not with 30S subunits that are part of 70S ribosomes or polysomes). Required for efficient processing of 16S rRNA. May interact with the 5'-terminal helix region of 16S rRNA. The polypeptide is Ribosome-binding factor A (Bradyrhizobium diazoefficiens (strain JCM 10833 / BCRC 13528 / IAM 13628 / NBRC 14792 / USDA 110)).